Consider the following 1345-residue polypeptide: DNA-directed RNA polymerase subunit beta (1345 aa).

Belongs to the RNA polymerase beta chain family. As to quaternary structure, the RNAP catalytic core consists of 2 alpha, 1 beta, 1 beta' and 1 omega subunit. When a sigma factor is associated with the core the holoenzyme is formed, which can initiate transcription.

It carries out the reaction RNA(n) + a ribonucleoside 5'-triphosphate = RNA(n+1) + diphosphate. In terms of biological role, DNA-dependent RNA polymerase catalyzes the transcription of DNA into RNA using the four ribonucleoside triphosphates as substrates. This chain is DNA-directed RNA polymerase subunit beta, found in Shewanella oneidensis (strain ATCC 700550 / JCM 31522 / CIP 106686 / LMG 19005 / NCIMB 14063 / MR-1).